A 314-amino-acid polypeptide reads, in one-letter code: BURP domain-containing protein 8 (314 aa).

The first 16 residues, 1–16 (MDLVRLTSLLPPSVMG), serve as a signal peptide directing secretion. Positions 98-314 (FFLEKDLFPG…PLGDMLWVRN (217 aa)) constitute a BURP domain.

As to expression, expressed in shoot and panicles.

This chain is BURP domain-containing protein 8 (BURP8), found in Oryza sativa subsp. japonica (Rice).